A 394-amino-acid polypeptide reads, in one-letter code: Elongation factor Tu (394 aa).

One can recognise a tr-type G domain in the interval Lys10–Glu204. The interval Gly19–Thr26 is G1. Gly19 to Thr26 serves as a coordination point for GTP. Residue Thr26 coordinates Mg(2+). Residues Gly60 to Asn64 form a G2 region. The segment at Asp81–Gly84 is G3. GTP is bound by residues Asp81–His85 and Asn136–Asp139. A G4 region spans residues Asn136–Asp139. The G5 stretch occupies residues Ser174–Leu176.

It belongs to the TRAFAC class translation factor GTPase superfamily. Classic translation factor GTPase family. EF-Tu/EF-1A subfamily. Monomer.

Its subcellular location is the cytoplasm. It carries out the reaction GTP + H2O = GDP + phosphate + H(+). In terms of biological role, GTP hydrolase that promotes the GTP-dependent binding of aminoacyl-tRNA to the A-site of ribosomes during protein biosynthesis. The chain is Elongation factor Tu from Neisseria meningitidis serogroup A / serotype 4A (strain DSM 15465 / Z2491).